Here is a 430-residue protein sequence, read N- to C-terminus: Long-chain specific acyl-CoA dehydrogenase, mitochondrial (430 aa).

Residues 1 to 30 (MAARLLRGSLRVLGGHRAPRQLPAARCSHS) constitute a mitochondrion transit peptide. At Lys42 the chain carries N6-acetyllysine. Ser54 carries the post-translational modification Phosphoserine. N6-acetyllysine; alternate occurs at positions 66 and 81. Lys66 and Lys81 each carry N6-succinyllysine; alternate. An N6-acetyllysine mark is found at Lys92 and Lys95. N6-succinyllysine is present on Lys165. FAD is bound by residues 170–179 (IAMTEPGAGS) and 203–205 (FIS). Ser179 contributes to the substrate binding site. A substrate-binding site is contributed by 227–228 (AH). Residue Lys240 is modified to N6-succinyllysine. N6-acetyllysine; alternate is present on residues Lys254 and Lys279. Residues Lys254 and Lys279 each carry the N6-succinyllysine; alternate modification. Substrate contacts are provided by residues Tyr282 and 289–292 (PQER). Glu291 (proton acceptor) is an active-site residue. Residue Arg317 coordinates FAD. Lys318 bears the N6-acetyllysine mark. Position 322 is an N6-acetyllysine; alternate (Lys322). The residue at position 322 (Lys322) is an N6-succinyllysine; alternate. Gln328 contacts FAD. Lys358 carries the N6-acetyllysine modification. Ser362 carries the post-translational modification Phosphoserine. 385 to 389 (QLHGG) is a binding site for FAD. 412-413 (GG) is a substrate binding site. 414–416 (TNE) contacts FAD.

The protein belongs to the acyl-CoA dehydrogenase family. Homotetramer. It depends on FAD as a cofactor. In terms of processing, acetylation at Lys-318 and Lys-322 in proximity of the cofactor-binding sites strongly reduces catalytic activity. These sites are deacetylated by SIRT3.

The protein localises to the mitochondrion matrix. It carries out the reaction a long-chain 2,3-saturated fatty acyl-CoA + oxidized [electron-transfer flavoprotein] + H(+) = a long-chain (2E)-enoyl-CoA + reduced [electron-transfer flavoprotein]. It catalyses the reaction hexanoyl-CoA + oxidized [electron-transfer flavoprotein] + H(+) = (2E)-hexenoyl-CoA + reduced [electron-transfer flavoprotein]. The catalysed reaction is octanoyl-CoA + oxidized [electron-transfer flavoprotein] + H(+) = (2E)-octenoyl-CoA + reduced [electron-transfer flavoprotein]. The enzyme catalyses decanoyl-CoA + oxidized [electron-transfer flavoprotein] + H(+) = (2E)-decenoyl-CoA + reduced [electron-transfer flavoprotein]. It carries out the reaction dodecanoyl-CoA + oxidized [electron-transfer flavoprotein] + H(+) = (2E)-dodecenoyl-CoA + reduced [electron-transfer flavoprotein]. It catalyses the reaction tetradecanoyl-CoA + oxidized [electron-transfer flavoprotein] + H(+) = (2E)-tetradecenoyl-CoA + reduced [electron-transfer flavoprotein]. The catalysed reaction is oxidized [electron-transfer flavoprotein] + hexadecanoyl-CoA + H(+) = (2E)-hexadecenoyl-CoA + reduced [electron-transfer flavoprotein]. The enzyme catalyses octadecanoyl-CoA + oxidized [electron-transfer flavoprotein] + H(+) = (2E)-octadecenoyl-CoA + reduced [electron-transfer flavoprotein]. It carries out the reaction eicosanoyl-CoA + oxidized [electron-transfer flavoprotein] + H(+) = (2E)-eicosenoyl-CoA + reduced [electron-transfer flavoprotein]. It catalyses the reaction docosanoyl-CoA + oxidized [electron-transfer flavoprotein] + H(+) = (2E)-docosenoyl-CoA + reduced [electron-transfer flavoprotein]. The catalysed reaction is tetracosanoyl-CoA + oxidized [electron-transfer flavoprotein] + H(+) = (2E)-tetracosenoyl-CoA + reduced [electron-transfer flavoprotein]. The enzyme catalyses (5E)-tetradecenoyl-CoA + oxidized [electron-transfer flavoprotein] + H(+) = (2E,5E)-tetradecadienoyl-CoA + reduced [electron-transfer flavoprotein]. It carries out the reaction (5Z)-tetradecenoyl-CoA + oxidized [electron-transfer flavoprotein] + H(+) = (2E,5Z)-tetradecadienoyl-CoA + reduced [electron-transfer flavoprotein]. It catalyses the reaction oxidized [electron-transfer flavoprotein] + (9Z)-octadecenoyl-CoA + H(+) = (2E,9Z)-octadecadienoyl-CoA + reduced [electron-transfer flavoprotein]. It functions in the pathway lipid metabolism; mitochondrial fatty acid beta-oxidation. Functionally, long-chain specific acyl-CoA dehydrogenase is one of the acyl-CoA dehydrogenases that catalyze the first step of mitochondrial fatty acid beta-oxidation, an aerobic process breaking down fatty acids into acetyl-CoA and allowing the production of energy from fats. The first step of fatty acid beta-oxidation consists in the removal of one hydrogen from C-2 and C-3 of the straight-chain fatty acyl-CoA thioester, resulting in the formation of trans-2-enoyl-CoA. Among the different mitochondrial acyl-CoA dehydrogenases, long-chain specific acyl-CoA dehydrogenase can act on saturated and unsaturated acyl-CoAs with 6 to 24 carbons with a preference for 8 to 18 carbons long primary chains. This chain is Long-chain specific acyl-CoA dehydrogenase, mitochondrial, found in Homo sapiens (Human).